Here is a 369-residue protein sequence, read N- to C-terminus: Peptide chain release factor 2 (369 aa).

Gln-251 is subject to N5-methylglutamine.

Belongs to the prokaryotic/mitochondrial release factor family. Methylated by PrmC. Methylation increases the termination efficiency of RF2.

It localises to the cytoplasm. Peptide chain release factor 2 directs the termination of translation in response to the peptide chain termination codons UGA and UAA. The chain is Peptide chain release factor 2 from Chlamydia trachomatis serovar A (strain ATCC VR-571B / DSM 19440 / HAR-13).